The following is a 482-amino-acid chain: Bifunctional protein HldE (482 aa).

The tract at residues 1–322 (MFGLESKSPK…QYIHTQPSNL (322 aa)) is ribokinase. 198–201 (NKKE) provides a ligand contact to ATP. Asp267 is an active-site residue. A cytidylyltransferase region spans residues 350-482 (FTNGCFDILH…IQRSKICKHS (133 aa)).

The protein in the N-terminal section; belongs to the carbohydrate kinase PfkB family. In the C-terminal section; belongs to the cytidylyltransferase family. As to quaternary structure, homodimer.

It carries out the reaction D-glycero-beta-D-manno-heptose 7-phosphate + ATP = D-glycero-beta-D-manno-heptose 1,7-bisphosphate + ADP + H(+). It catalyses the reaction D-glycero-beta-D-manno-heptose 1-phosphate + ATP + H(+) = ADP-D-glycero-beta-D-manno-heptose + diphosphate. The protein operates within nucleotide-sugar biosynthesis; ADP-L-glycero-beta-D-manno-heptose biosynthesis; ADP-L-glycero-beta-D-manno-heptose from D-glycero-beta-D-manno-heptose 7-phosphate: step 1/4. Its pathway is nucleotide-sugar biosynthesis; ADP-L-glycero-beta-D-manno-heptose biosynthesis; ADP-L-glycero-beta-D-manno-heptose from D-glycero-beta-D-manno-heptose 7-phosphate: step 3/4. It participates in bacterial outer membrane biogenesis; LPS core biosynthesis. Catalyzes the phosphorylation of D-glycero-D-manno-heptose 7-phosphate at the C-1 position to selectively form D-glycero-beta-D-manno-heptose-1,7-bisphosphate. Functionally, catalyzes the ADP transfer from ATP to D-glycero-beta-D-manno-heptose 1-phosphate, yielding ADP-D-glycero-beta-D-manno-heptose. The sequence is that of Bifunctional protein HldE from Helicobacter hepaticus (strain ATCC 51449 / 3B1).